The following is a 179-amino-acid chain: MAKLHDYYRDTVVNELKAKFNYSSVMQVPRIEKITLNMGVGEALTDKKLLDNAVADLTAISGQKPLITKARKSVAGFKIRQGYPIGCKVTLRGERMWEFFERLITIAVPRIRDFRGLNAKSFDGRGNYSMGVREQIIFPEIDYDKVDRVRGLDITITTTAKTDEEGQALLAAFNFPFRK.

The protein belongs to the universal ribosomal protein uL5 family. Part of the 50S ribosomal subunit; part of the 5S rRNA/L5/L18/L25 subcomplex. Contacts the 5S rRNA and the P site tRNA. Forms a bridge to the 30S subunit in the 70S ribosome.

Its function is as follows. This is one of the proteins that bind and probably mediate the attachment of the 5S RNA into the large ribosomal subunit, where it forms part of the central protuberance. In the 70S ribosome it contacts protein S13 of the 30S subunit (bridge B1b), connecting the 2 subunits; this bridge is implicated in subunit movement. Contacts the P site tRNA; the 5S rRNA and some of its associated proteins might help stabilize positioning of ribosome-bound tRNAs. This is Large ribosomal subunit protein uL5 from Glaesserella parasuis serovar 5 (strain SH0165) (Haemophilus parasuis).